Reading from the N-terminus, the 76-residue chain is Conotoxin TxMEKL-011 (76 aa).

A signal peptide spans 1–19; the sequence is MEKLTILLLVAAVLMSTQA. Residues 20 to 45 constitute a propeptide that is removed on maturation; that stretch reads LVERAGENRSKENIKFLLKRKRAADR. 3 disulfides stabilise this stretch: Cys-51–Cys-65, Cys-58–Cys-69, and Cys-64–Cys-73.

This sequence belongs to the conotoxin O2 superfamily. Expressed by the venom duct.

It is found in the secreted. The chain is Conotoxin TxMEKL-011 from Conus textile (Cloth-of-gold cone).